Consider the following 817-residue polypeptide: Actin filament-associated protein 1-like 2 (817 aa).

A Phosphotyrosine modification is found at Y56. The segment at 63–164 (HKQQNAESQD…KGKSAPHQWP (102 aa)) is disordered. Residues 123-139 (YYEEAEPYDTSLNEDGE) show a composition bias toward acidic residues. PH domains are found at residues 175 to 271 (DARI…EVSG) and 353 to 447 (SLET…SESG). Residue S408 is modified to Phosphoserine. Position 413 is a phosphotyrosine (Y413). Position 484 is a phosphoserine (S484). The span at 512-528 (TTAGEAPEEATPATDAP) shows a compositional bias: low complexity. 2 disordered regions span residues 512–657 (TTAG…KLGK) and 754–786 (GTTV…VNSA). Residues 652–748 (EIKLGKNRTE…VKDSLRKAEA (97 aa)) adopt a coiled-coil conformation. The segment covering 754 to 763 (GTTVDTTHLE) has biased composition (polar residues). The span at 767-782 (PRPKAATPTPAPDCTP) shows a compositional bias: low complexity.

As to quaternary structure, interacts with SRC. Interacts with LCK when tyrosine phosphorylated. Post-translationally, tyrosine phosphorylated (by SRC).

It localises to the cytoplasm. In terms of biological role, may play a role in a signaling cascade by enhancing the kinase activity of SRC. Contributes to SRC-regulated transcription activation. This chain is Actin filament-associated protein 1-like 2 (AFAP1L2), found in Bos taurus (Bovine).